The sequence spans 100 residues: Large ribosomal subunit protein bL21 (100 aa).

Belongs to the bacterial ribosomal protein bL21 family. As to quaternary structure, part of the 50S ribosomal subunit. Contacts protein L20.

Its function is as follows. This protein binds to 23S rRNA in the presence of protein L20. The sequence is that of Large ribosomal subunit protein bL21 from Deinococcus deserti (strain DSM 17065 / CIP 109153 / LMG 22923 / VCD115).